A 413-amino-acid chain; its full sequence is Arginine deiminase (413 aa).

The Amidino-cysteine intermediate role is filled by C403.

Belongs to the arginine deiminase family.

The protein localises to the cytoplasm. The catalysed reaction is L-arginine + H2O = L-citrulline + NH4(+). The protein operates within amino-acid degradation; L-arginine degradation via ADI pathway; carbamoyl phosphate from L-arginine: step 1/2. The chain is Arginine deiminase from Clostridium perfringens (strain SM101 / Type A).